The sequence spans 366 residues: NADH-quinone oxidoreductase subunit D (366 aa).

It belongs to the complex I 49 kDa subunit family. NDH-1 is composed of 14 different subunits. Subunits NuoB, C, D, E, F, and G constitute the peripheral sector of the complex.

The protein localises to the cell membrane. It carries out the reaction a quinone + NADH + 5 H(+)(in) = a quinol + NAD(+) + 4 H(+)(out). NDH-1 shuttles electrons from NADH, via FMN and iron-sulfur (Fe-S) centers, to quinones in the respiratory chain. The immediate electron acceptor for the enzyme in this species is believed to be a menaquinone. Couples the redox reaction to proton translocation (for every two electrons transferred, four hydrogen ions are translocated across the cytoplasmic membrane), and thus conserves the redox energy in a proton gradient. This chain is NADH-quinone oxidoreductase subunit D, found in Bacillus anthracis.